The chain runs to 325 residues: Tetraacyldisaccharide 4'-kinase (325 aa).

55-62 (TAGGNGKT) is an ATP binding site.

Belongs to the LpxK family.

It carries out the reaction a lipid A disaccharide + ATP = a lipid IVA + ADP + H(+). It participates in glycolipid biosynthesis; lipid IV(A) biosynthesis; lipid IV(A) from (3R)-3-hydroxytetradecanoyl-[acyl-carrier-protein] and UDP-N-acetyl-alpha-D-glucosamine: step 6/6. In terms of biological role, transfers the gamma-phosphate of ATP to the 4'-position of a tetraacyldisaccharide 1-phosphate intermediate (termed DS-1-P) to form tetraacyldisaccharide 1,4'-bis-phosphate (lipid IVA). The protein is Tetraacyldisaccharide 4'-kinase of Salmonella paratyphi A (strain ATCC 9150 / SARB42).